The chain runs to 359 residues: DNA replication and repair protein RecF (359 aa).

30-37 is a binding site for ATP; it reads GNNGSGKT.

The protein belongs to the RecF family.

Its subcellular location is the cytoplasm. In terms of biological role, the RecF protein is involved in DNA metabolism; it is required for DNA replication and normal SOS inducibility. RecF binds preferentially to single-stranded, linear DNA. It also seems to bind ATP. This Haemophilus influenzae (strain 86-028NP) protein is DNA replication and repair protein RecF.